Reading from the N-terminus, the 37-residue chain is Large ribosomal subunit protein bL36c (37 aa).

It belongs to the bacterial ribosomal protein bL36 family.

Its subcellular location is the plastid. The protein localises to the chloroplast. This Coffea arabica (Arabian coffee) protein is Large ribosomal subunit protein bL36c.